Reading from the N-terminus, the 109-residue chain is Large ribosomal subunit protein uL24 (109 aa).

The tract at residues 1–24 (MANVTTDIKRNDTVAVTSGKDKGK) is disordered.

It belongs to the universal ribosomal protein uL24 family. As to quaternary structure, part of the 50S ribosomal subunit.

Functionally, one of two assembly initiator proteins, it binds directly to the 5'-end of the 23S rRNA, where it nucleates assembly of the 50S subunit. In terms of biological role, one of the proteins that surrounds the polypeptide exit tunnel on the outside of the subunit. The sequence is that of Large ribosomal subunit protein uL24 from Koribacter versatilis (strain Ellin345).